The sequence spans 136 residues: MSRHKSKSIPGRNLRLADQIQKDLAGLIQRELDMSRAGLITLSGVELSADYAHAKVYFTVLGAEPDAAAALLNEKAGWLHSQLYKLLHIHTVPTLRFVHDAQIARGIEMSALIDRANRPGPAADEPDEPDEPEDRR.

The disordered stretch occupies residues Asp-114–Arg-136. The segment covering Asp-124–Arg-136 has biased composition (acidic residues).

Belongs to the RbfA family. In terms of assembly, monomer. Binds 30S ribosomal subunits, but not 50S ribosomal subunits or 70S ribosomes.

The protein resides in the cytoplasm. Its function is as follows. One of several proteins that assist in the late maturation steps of the functional core of the 30S ribosomal subunit. Associates with free 30S ribosomal subunits (but not with 30S subunits that are part of 70S ribosomes or polysomes). Required for efficient processing of 16S rRNA. May interact with the 5'-terminal helix region of 16S rRNA. This Bordetella petrii (strain ATCC BAA-461 / DSM 12804 / CCUG 43448) protein is Ribosome-binding factor A.